The chain runs to 271 residues: Ribosomal RNA small subunit methyltransferase A (271 aa).

S-adenosyl-L-methionine is bound by residues His-11, Leu-13, Gly-38, Glu-58, Asp-86, and Asn-101.

This sequence belongs to the class I-like SAM-binding methyltransferase superfamily. rRNA adenine N(6)-methyltransferase family. RsmA subfamily.

The protein localises to the cytoplasm. It carries out the reaction adenosine(1518)/adenosine(1519) in 16S rRNA + 4 S-adenosyl-L-methionine = N(6)-dimethyladenosine(1518)/N(6)-dimethyladenosine(1519) in 16S rRNA + 4 S-adenosyl-L-homocysteine + 4 H(+). In terms of biological role, specifically dimethylates two adjacent adenosines (A1518 and A1519) in the loop of a conserved hairpin near the 3'-end of 16S rRNA in the 30S particle. May play a critical role in biogenesis of 30S subunits. This Helicobacter pylori (strain G27) protein is Ribosomal RNA small subunit methyltransferase A.